The primary structure comprises 312 residues: Glyoxylate/hydroxypyruvate reductase A (312 aa).

Residue Arg227 is part of the active site. Residue His275 is the Proton donor of the active site.

Belongs to the D-isomer specific 2-hydroxyacid dehydrogenase family. GhrA subfamily.

Its subcellular location is the cytoplasm. The enzyme catalyses glycolate + NADP(+) = glyoxylate + NADPH + H(+). It carries out the reaction (R)-glycerate + NAD(+) = 3-hydroxypyruvate + NADH + H(+). The catalysed reaction is (R)-glycerate + NADP(+) = 3-hydroxypyruvate + NADPH + H(+). Functionally, catalyzes the NADPH-dependent reduction of glyoxylate and hydroxypyruvate into glycolate and glycerate, respectively. The protein is Glyoxylate/hydroxypyruvate reductase A of Citrobacter koseri (strain ATCC BAA-895 / CDC 4225-83 / SGSC4696).